The chain runs to 309 residues: Protease HtpX homolog (309 aa).

A run of 2 helical transmembrane segments spans residues 7–27 (TTVL…MLGG) and 29–49 (QGMM…YWYS). Histidine 131 serves as a coordination point for Zn(2+). Residue glutamate 132 is part of the active site. Histidine 135 is a binding site for Zn(2+). Transmembrane regions (helical) follow at residues 141-161 (ILIG…ASMA) and 182-202 (IGLI…QMAI). Glutamate 207 contacts Zn(2+). Residues 278 to 309 (RHGSDSGTGNRDSSIRRRNMNTEAKAAWDRLR) form a disordered region.

This sequence belongs to the peptidase M48B family. Requires Zn(2+) as cofactor.

It localises to the cell inner membrane. The chain is Protease HtpX homolog from Desulforapulum autotrophicum (strain ATCC 43914 / DSM 3382 / VKM B-1955 / HRM2) (Desulfobacterium autotrophicum).